The primary structure comprises 206 residues: Holliday junction branch migration complex subunit RuvA (206 aa).

The domain I stretch occupies residues 1 to 64; that stretch reads MIGRLHGIII…EDAQLLYGFN (64 aa). A domain II region spans residues 65 to 143; the sequence is TRQERTLFRE…GWISHDLFTP (79 aa). Residues 144-157 are flexible linker; that stretch reads YTDAAPVDHEPSLA. Positions 158-206 are domain III; it reads PADTVESEAVAALLALGYKPQQASLVVSKVIKPEMTVENVIREALRSML.

This sequence belongs to the RuvA family. In terms of assembly, homotetramer. Forms an RuvA(8)-RuvB(12)-Holliday junction (HJ) complex. HJ DNA is sandwiched between 2 RuvA tetramers; dsDNA enters through RuvA and exits via RuvB. An RuvB hexamer assembles on each DNA strand where it exits the tetramer. Each RuvB hexamer is contacted by two RuvA subunits (via domain III) on 2 adjacent RuvB subunits; this complex drives branch migration. In the full resolvosome a probable DNA-RuvA(4)-RuvB(12)-RuvC(2) complex forms which resolves the HJ.

The protein localises to the cytoplasm. Functionally, the RuvA-RuvB-RuvC complex processes Holliday junction (HJ) DNA during genetic recombination and DNA repair, while the RuvA-RuvB complex plays an important role in the rescue of blocked DNA replication forks via replication fork reversal (RFR). RuvA specifically binds to HJ cruciform DNA, conferring on it an open structure. The RuvB hexamer acts as an ATP-dependent pump, pulling dsDNA into and through the RuvAB complex. HJ branch migration allows RuvC to scan DNA until it finds its consensus sequence, where it cleaves and resolves the cruciform DNA. The chain is Holliday junction branch migration complex subunit RuvA from Tolumonas auensis (strain DSM 9187 / NBRC 110442 / TA 4).